A 178-amino-acid polypeptide reads, in one-letter code: MKDYNIENNNVEEENPNVETQVVDNEEIVRLKAEIEELKDKLIRTTAEIDNTRKRLEKARDEAKDYAIATFAKELLNVSDNLARALAHKPANSDVEVTNIISGVQMTKDELDKIFHKHHIEEIKPAIGSMFDYNLHNAISHIEHPDHEPNSIITLMQSGYKIRDRLLRPAAVQVVKKP.

Belongs to the GrpE family. In terms of assembly, homodimer.

The protein resides in the cytoplasm. Its function is as follows. Participates actively in the response to hyperosmotic and heat shock by preventing the aggregation of stress-denatured proteins, in association with DnaK and GrpE. It is the nucleotide exchange factor for DnaK and may function as a thermosensor. Unfolded proteins bind initially to DnaJ; upon interaction with the DnaJ-bound protein, DnaK hydrolyzes its bound ATP, resulting in the formation of a stable complex. GrpE releases ADP from DnaK; ATP binding to DnaK triggers the release of the substrate protein, thus completing the reaction cycle. Several rounds of ATP-dependent interactions between DnaJ, DnaK and GrpE are required for fully efficient folding. In Rickettsia prowazekii (strain Madrid E), this protein is Protein GrpE.